Consider the following 934-residue polypeptide: Serine/threonine-protein kinase PknD (934 aa).

In terms of domain architecture, Protein kinase spans 4 to 296; sequence YELIRLIGRG…ELRKALQPHL (293 aa). ATP-binding positions include 10–18 and K33; that span reads IGRGGMGEV. D138 serves as the catalytic Proton acceptor.

This sequence belongs to the protein kinase superfamily. Ser/Thr protein kinase family. Autophosphorylated on serine and threonine residues.

The catalysed reaction is L-seryl-[protein] + ATP = O-phospho-L-seryl-[protein] + ADP + H(+). It catalyses the reaction L-threonyl-[protein] + ATP = O-phospho-L-threonyl-[protein] + ADP + H(+). Functionally, together with the serine/threonine kinase Pkn1, may play a role in the specific interactions with host proteins during intracellular growth. The chain is Serine/threonine-protein kinase PknD from Chlamydia muridarum (strain MoPn / Nigg).